The sequence spans 455 residues: MTFTDWPWRHWRQVRSQAPALRLNDEVLSWRALCERIDVLAGGFAAQGVREGDGVLLRAGNQPRTLLAWLALMQCGARVLPVNPQLPQTLLEALVPKLTLRFALTLEGENAFSGLTALQIQKSTAAYAVAWQPQRLVSMTLTSGSTGLPKAAVHTCQAHLASAQGVLSLMPFGPQDDWLLSLPLFHVSGQGIMWRWLFAGARMTVRDKQPLEQMLAGCTHASLVPTQLWRLLANRAAVTLKAVLLGGAVIPVELTDQASKQGIRCWCGYGLTEFASTVCAKEADGSDDVGAPLPGREIRIVDNEVWLRAASMAEGYWRDGKLIPLVNDEGWFATRDRGELNHGRLTIAGRLDNLFFSGGEGIQPEEVERVINAHPLVQQAFVVPVEDKEFGHRPVAVVEYASQAGDVNLAEWVRDKLARFQQPVRWLTMPSELKNGGIKISRRALQQWVCENCKN.

The protein belongs to the ATP-dependent AMP-binding enzyme family. MenE subfamily.

The catalysed reaction is 2-succinylbenzoate + ATP + CoA = 2-succinylbenzoyl-CoA + AMP + diphosphate. Its pathway is quinol/quinone metabolism; 1,4-dihydroxy-2-naphthoate biosynthesis; 1,4-dihydroxy-2-naphthoate from chorismate: step 5/7. It participates in quinol/quinone metabolism; menaquinone biosynthesis. Functionally, converts 2-succinylbenzoate (OSB) to 2-succinylbenzoyl-CoA (OSB-CoA). This chain is 2-succinylbenzoate--CoA ligase, found in Salmonella typhimurium (strain LT2 / SGSC1412 / ATCC 700720).